Here is a 289-residue protein sequence, read N- to C-terminus: Light-independent protochlorophyllide reductase iron-sulfur ATP-binding protein (289 aa).

ATP contacts are provided by residues 10-15 and Lys-39; that span reads GIGKST. Position 14 (Ser-14) interacts with Mg(2+). [4Fe-4S] cluster contacts are provided by Cys-95 and Cys-129. 180-181 is a binding site for ATP; sequence NR.

Belongs to the NifH/BchL/ChlL family. Homodimer. Protochlorophyllide reductase is composed of three subunits; ChlL, ChlN and ChlB. It depends on [4Fe-4S] cluster as a cofactor.

It is found in the plastid. It localises to the chloroplast. The enzyme catalyses chlorophyllide a + oxidized 2[4Fe-4S]-[ferredoxin] + 2 ADP + 2 phosphate = protochlorophyllide a + reduced 2[4Fe-4S]-[ferredoxin] + 2 ATP + 2 H2O. It participates in porphyrin-containing compound metabolism; chlorophyll biosynthesis (light-independent). In terms of biological role, component of the dark-operative protochlorophyllide reductase (DPOR) that uses Mg-ATP and reduced ferredoxin to reduce ring D of protochlorophyllide (Pchlide) to form chlorophyllide a (Chlide). This reaction is light-independent. The L component serves as a unique electron donor to the NB-component of the complex, and binds Mg-ATP. The sequence is that of Light-independent protochlorophyllide reductase iron-sulfur ATP-binding protein from Marchantia polymorpha (Common liverwort).